The following is a 148-amino-acid chain: Small ribosomal subunit protein uS7m (148 aa).

It belongs to the universal ribosomal protein uS7 family. In terms of assembly, part of the small ribosomal subunit.

The protein localises to the mitochondrion. In terms of biological role, one of the primary rRNA binding proteins, it binds directly to 18S rRNA where it nucleates assembly of the head domain of the small subunit. In Arabidopsis thaliana (Mouse-ear cress), this protein is Small ribosomal subunit protein uS7m (RPS7).